Here is a 437-residue protein sequence, read N- to C-terminus: MEISAKLTNSANALASTKIPTASINEKVNELAKQTAKKVRIDGFRPGKAPVAAVLKRYKKELEDDAKNDIFRNFVDESLKILGKEKNEILGEPIFSKYEEKDGIIDVEMKMSFRPEVKIDGYEKFIPEFATPRVTKKEIDEKINEFLLMIAPLEKSDKEVLEKGDFAKFDFEGFVDDKPFDGGKAQDYVLEIGSGRFIPGFEDGMLGMKIDEERDIKVKFPENYQAENLAGKDAIFKVKLHEIQCKKIGELDDETLKRLMPGEKEPSKEKFEAQIKEQIRADKMAKLINEELKPKFADIIVENFIFDMPEIILEQEIDLQFRNAWGTFSKEEIENFRKDKDALTKKRDEFRDEAVKSVKMTFLIDEIAKDRKIQVSDQELVSAVYMEAYRYGMDPKKHLEEYRTNGYLPVVKMALLEEKLFNDIFSKDKKSEKTEEK.

One can recognise a PPIase FKBP-type domain in the interval 164–249 (GDFAKFDFEG…LHEIQCKKIG (86 aa)).

The protein belongs to the FKBP-type PPIase family. Tig subfamily.

It is found in the cytoplasm. It catalyses the reaction [protein]-peptidylproline (omega=180) = [protein]-peptidylproline (omega=0). Its function is as follows. Involved in protein export. Acts as a chaperone by maintaining the newly synthesized protein in an open conformation. Functions as a peptidyl-prolyl cis-trans isomerase. This Campylobacter hominis (strain ATCC BAA-381 / DSM 21671 / CCUG 45161 / LMG 19568 / NCTC 13146 / CH001A) protein is Trigger factor.